The sequence spans 241 residues: 1-(5-phosphoribosyl)-5-[(5-phosphoribosylamino)methylideneamino] imidazole-4-carboxamide isomerase (241 aa).

Asp-10 functions as the Proton acceptor in the catalytic mechanism. Asp-131 acts as the Proton donor in catalysis.

Belongs to the HisA/HisF family.

It is found in the cytoplasm. It carries out the reaction 1-(5-phospho-beta-D-ribosyl)-5-[(5-phospho-beta-D-ribosylamino)methylideneamino]imidazole-4-carboxamide = 5-[(5-phospho-1-deoxy-D-ribulos-1-ylimino)methylamino]-1-(5-phospho-beta-D-ribosyl)imidazole-4-carboxamide. The protein operates within amino-acid biosynthesis; L-histidine biosynthesis; L-histidine from 5-phospho-alpha-D-ribose 1-diphosphate: step 4/9. The sequence is that of 1-(5-phosphoribosyl)-5-[(5-phosphoribosylamino)methylideneamino] imidazole-4-carboxamide isomerase from Bifidobacterium longum (strain DJO10A).